A 375-amino-acid chain; its full sequence is MKSAASSSSSSAGSNWKALKKTLGSDASSSSASSSTNNRRKLSTSESTKPKRTRLDAKEKDAEGSKSCSPAPTSLPWFAEDISPQDLELVRESASGKMARSGEWEGIVDAKLKKQIILGGLPSDASSAKKEPGNYLAIDCEMVGVGDKGSESILARVSIVNFHGATIYDQFVRPQEKVTDYRTWVSGVRPKDLKGAPSFSQVQGEVANLIKGKVLVGHAIQNDLKALLLSHPKVLIRDTATFQPLRDLAKTKYPSLKKLAKLVLGIDIQLEGESHSSVEDARATMAVFRSQKPKWDEMLRSQNKGGRGSLARLASRSSAANKVWKAPANGQAVDAASPALDKRSMLAFTSASAVHDTVRLKPRMAAKADWWKESM.

The tract at residues 21–78 (KTLGSDASSSSASSSTNNRRKLSTSESTKPKRTRLDAKEKDAEGSKSCSPAPTSLPWF) is disordered. The segment covering 25–35 (SDASSSSASSS) has biased composition (low complexity). Residues 53 to 64 (TRLDAKEKDAEG) are compositionally biased toward basic and acidic residues. Residues 134-297 (NYLAIDCEMV…FRSQKPKWDE (164 aa)) form the Exonuclease domain.

The protein belongs to the REXO4 family.

The protein resides in the nucleus. Its function is as follows. Exoribonuclease involved in ribosome biosynthesis. Involved in the processing of ITS1, the internal transcribed spacer localized between the 18S and 5.8S rRNAs. The protein is RNA exonuclease 4 (REX4) of Mycosarcoma maydis (Corn smut fungus).